Reading from the N-terminus, the 309-residue chain is Malate dehydrogenase (309 aa).

NAD(+) contacts are provided by residues 10 to 15 (GAGNVG) and Asp-34. Residues Arg-83 and Arg-89 each contribute to the substrate site. NAD(+)-binding positions include Asn-96 and 119-121 (VTN). Residues Asn-121 and Arg-152 each contribute to the substrate site. Residue His-176 is the Proton acceptor of the active site.

The protein belongs to the LDH/MDH superfamily. MDH type 3 family.

The enzyme catalyses (S)-malate + NAD(+) = oxaloacetate + NADH + H(+). Its function is as follows. Catalyzes the reversible oxidation of malate to oxaloacetate. This Desulforudis audaxviator (strain MP104C) protein is Malate dehydrogenase.